The sequence spans 184 residues: Peptidyl-tRNA hydrolase (184 aa).

Tyrosine 14 contributes to the tRNA binding site. Histidine 19 (proton acceptor) is an active-site residue. TRNA is bound by residues phenylalanine 64, asparagine 66, and asparagine 112.

This sequence belongs to the PTH family. Monomer.

Its subcellular location is the cytoplasm. The catalysed reaction is an N-acyl-L-alpha-aminoacyl-tRNA + H2O = an N-acyl-L-amino acid + a tRNA + H(+). Functionally, hydrolyzes ribosome-free peptidyl-tRNAs (with 1 or more amino acids incorporated), which drop off the ribosome during protein synthesis, or as a result of ribosome stalling. In terms of biological role, catalyzes the release of premature peptidyl moieties from peptidyl-tRNA molecules trapped in stalled 50S ribosomal subunits, and thus maintains levels of free tRNAs and 50S ribosomes. This Thermoanaerobacter pseudethanolicus (strain ATCC 33223 / 39E) (Clostridium thermohydrosulfuricum) protein is Peptidyl-tRNA hydrolase.